A 579-amino-acid chain; its full sequence is Putative diflavin flavoprotein A 2 (579 aa).

Residues 50–243 (QNGTTYNSYL…GKIKIIANGH (194 aa)) form a zinc metallo-hydrolase region. Positions 99, 101, 103, 166, 185, and 243 each coordinate Fe cation. A Flavodoxin-like domain is found at 272–460 (VGLFYVADYG…MLASWVSQAS (189 aa)). The segment at 461-579 (LQPLGFTIAV…VRHRKVGNYY (119 aa)) is flavodoxin-reductase-like.

This sequence in the N-terminal section; belongs to the zinc metallo-hydrolase group 3 family. The protein in the C-terminal section; belongs to the flavodoxin reductase family. Fe cation is required as a cofactor.

In terms of biological role, mediates electron transfer from NADH to oxygen, reducing it to water. This modular protein has 3 redox cofactors, in other organisms the same activity requires 2 or 3 proteins. The chain is Putative diflavin flavoprotein A 2 (dfa2) from Nostoc sp. (strain PCC 7120 / SAG 25.82 / UTEX 2576).